The following is a 238-amino-acid chain: Putative tyrosine-protein phosphatase OCA1 (238 aa).

The tract at residues 1-43 is disordered; sequence MTSKVGEYEDVPEDESRLTEENVSVPEEEVEDEDEEEDDDDDH. The residue at position 2 (threonine 2) is an N-acetylthreonine. Position 24 is a phosphoserine (serine 24). Residues 26-42 are compositionally biased toward acidic residues; that stretch reads PEEEVEDEDEEEDDDDD. The Tyrosine-protein phosphatase domain occupies 72-230; the sequence is NFCPVERYLY…LVKIDKNKAP (159 aa). The active-site Phosphocysteine intermediate is cysteine 168.

Belongs to the protein-tyrosine phosphatase family.

Its subcellular location is the cytoplasm. The catalysed reaction is O-phospho-L-tyrosyl-[protein] + H2O = L-tyrosyl-[protein] + phosphate. Its function is as follows. Putative tyrosine-protein phosphatase required for protection against superoxide stress. Involved in cell-cycle delay in response to linoleic acid hydroperoxide (LoaOOH). This chain is Putative tyrosine-protein phosphatase OCA1 (OCA1), found in Saccharomyces cerevisiae (strain YJM789) (Baker's yeast).